A 384-amino-acid chain; its full sequence is GTPase Obg (384 aa).

The 159-residue stretch at 1-159 (MKFIDEAKIE…RSLQLELKVL (159 aa)) folds into the Obg domain. The tract at residues 20–46 (ATSFRREKFVPRGGPDGGDGGKGGSVW) is disordered. Residues 33-43 (GPDGGDGGKGG) are compositionally biased toward gly residues. Residues 160-348 (ADVGLLGMPN…LVHQINQYLT (189 aa)) form the OBG-type G domain. Residues 166–173 (GMPNAGKS), 191–195 (FTTLH), 213–216 (DIPG), 284–287 (NKLD), and 329–331 (SAL) each bind GTP. Residues Ser173 and Thr193 each contribute to the Mg(2+) site.

Belongs to the TRAFAC class OBG-HflX-like GTPase superfamily. OBG GTPase family. Monomer. The cofactor is Mg(2+).

It is found in the cytoplasm. An essential GTPase which binds GTP, GDP and possibly (p)ppGpp with moderate affinity, with high nucleotide exchange rates and a fairly low GTP hydrolysis rate. Plays a role in control of the cell cycle, stress response, ribosome biogenesis and in those bacteria that undergo differentiation, in morphogenesis control. The protein is GTPase Obg of Neisseria meningitidis serogroup B (strain ATCC BAA-335 / MC58).